Reading from the N-terminus, the 92-residue chain is Large ribosomal subunit protein bL34m (92 aa).

Residues 1-46 (MAVLAGSLLGPTSRSAALLGGRWLQPRAWLGFPDAWGLPTPQQARG) constitute a mitochondrion transit peptide. Residue Ser-71 is modified to Phosphoserine.

It belongs to the bacterial ribosomal protein bL34 family. Component of the mitochondrial large ribosomal subunit (mt-LSU). Mature mammalian 55S mitochondrial ribosomes consist of a small (28S) and a large (39S) subunit. The 28S small subunit contains a 12S ribosomal RNA (12S mt-rRNA) and 30 different proteins. The 39S large subunit contains a 16S rRNA (16S mt-rRNA), a copy of mitochondrial valine transfer RNA (mt-tRNA(Val)), which plays an integral structural role, and 52 different proteins.

Its subcellular location is the mitochondrion. The polypeptide is Large ribosomal subunit protein bL34m (MRPL34) (Homo sapiens (Human)).